The chain runs to 402 residues: Putative cytochrome P450 133B1 (402 aa).

Residue Cys348 coordinates heme.

Belongs to the cytochrome P450 family. The cofactor is heme.

This Xylella fastidiosa (strain 9a5c) protein is Putative cytochrome P450 133B1 (cyp133B1).